The chain runs to 293 residues: Undecaprenyl-diphosphatase (293 aa).

A run of 7 helical transmembrane segments spans residues 3–23, 43–63, 85–105, 109–129, 203–223, 238–258, and 269–289; these read IALA…EFLP, KGKI…CWEF, LNVI…GKAI, LFNP…ILWA, VATE…TVYE, IFGI…RWLL, and FAWY…THLI.

The protein belongs to the UppP family.

Its subcellular location is the cell inner membrane. The catalysed reaction is di-trans,octa-cis-undecaprenyl diphosphate + H2O = di-trans,octa-cis-undecaprenyl phosphate + phosphate + H(+). Catalyzes the dephosphorylation of undecaprenyl diphosphate (UPP). Confers resistance to bacitracin. This is Undecaprenyl-diphosphatase from Ralstonia nicotianae (strain ATCC BAA-1114 / GMI1000) (Ralstonia solanacearum).